The sequence spans 53 residues: MPQMAPISWLLLFIIFSITFILFCSINYYSYMPNSPKSNELKNINLNSMNWKW.

Residues Met4–Cys24 form a helical membrane-spanning segment.

The protein belongs to the ATPase protein 8 family. As to quaternary structure, F-type ATPases have 2 components, CF(1) - the catalytic core - and CF(0) - the membrane proton channel.

It localises to the mitochondrion membrane. Mitochondrial membrane ATP synthase (F(1)F(0) ATP synthase or Complex V) produces ATP from ADP in the presence of a proton gradient across the membrane which is generated by electron transport complexes of the respiratory chain. F-type ATPases consist of two structural domains, F(1) - containing the extramembraneous catalytic core and F(0) - containing the membrane proton channel, linked together by a central stalk and a peripheral stalk. During catalysis, ATP synthesis in the catalytic domain of F(1) is coupled via a rotary mechanism of the central stalk subunits to proton translocation. Part of the complex F(0) domain. Minor subunit located with subunit a in the membrane. The chain is ATP synthase protein 8 (mt:ATPase8) from Drosophila mauritiana (Fruit fly).